Consider the following 472-residue polypeptide: UDP-N-acetylmuramate--L-alanine ligase (472 aa).

121 to 127 (GTHGKTT) serves as a coordination point for ATP.

It belongs to the MurCDEF family.

It is found in the cytoplasm. The catalysed reaction is UDP-N-acetyl-alpha-D-muramate + L-alanine + ATP = UDP-N-acetyl-alpha-D-muramoyl-L-alanine + ADP + phosphate + H(+). Its pathway is cell wall biogenesis; peptidoglycan biosynthesis. In terms of biological role, cell wall formation. The protein is UDP-N-acetylmuramate--L-alanine ligase of Hahella chejuensis (strain KCTC 2396).